Here is a 684-residue protein sequence, read N- to C-terminus: Signal peptide peptidase-like 2C (684 aa).

The first 21 residues, 1–21 (MACLGFLLPVGFLLLISTVAG), serve as a signal peptide directing secretion. Residues 22–186 (GKYGVAHVVS…APPEPIIDYN (165 aa)) are Lumenal-facing. One can recognise a PA domain in the interval 83-163 (SPSQRPLRQT…HYADMLDILS (81 aa)). An N-linked (GlcNAc...) asparagine glycan is attached at asparagine 100. A helical transmembrane segment spans residues 187–207 (MLVIFILAVGTVAAGGYWAGL). Topologically, residues 208 to 253 (TEANRLQRRRARRGGGSGGHHQLQEAAAAEGAQKEDNEDIPVDFTP) are cytoplasmic. The segment at 216 to 242 (RRARRGGGSGGHHQLQEAAAAEGAQKE) is disordered. The span at 227-238 (HHQLQEAAAAEG) shows a compositional bias: low complexity. Residues 254–274 (AMTGVVVTLSCSLMLLLYFFY) form a helical membrane-spanning segment. The Lumenal segment spans residues 275–276 (DH). Residues 277-297 (FVYVTIGIFGLGAGIGLYSCL) traverse the membrane as a helical segment. The Cytoplasmic portion of the chain corresponds to 298–319 (SPLVCRLSLRQYQRPPHSLWAS). A helical transmembrane segment spans residues 320–340 (LPLPLLLLASLCATVIIFWVA). Residues 341-346 (YRNEDR) lie on the Lumenal side of the membrane. The chain crosses the membrane as a helical span at residues 347–365 (WAWLLQDTLGISYCLFVLH). Residues 366–376 (RVRLPTLKNCS) lie on the Cytoplasmic side of the membrane. Residues 377–397 (SFLLALLAFDVFFVFVTPFFT) form a helical membrane-spanning segment. Residue aspartate 386 is part of the active site. The Lumenal portion of the chain corresponds to 398 to 439 (KTGESIMAQVALGPAESSSHERLPMVLKVPRLRVSALTLCSQ). Residues 440 to 460 (PFSILGFGDIVVPGFLVAYCC) traverse the membrane as a helical segment. Aspartate 448 is an active-site residue. Residues 461–472 (RFDVQVCSRQIY) lie on the Cytoplasmic side of the membrane. A helical membrane pass occupies residues 473-493 (FVACTVAYAVGLLVTFMAMVL). Residues 494–495 (MQ) are Lumenal-facing. The chain crosses the membrane as a helical span at residues 496 to 516 (MGQPALLYLVSSTLLTSLAVA). The short motif at 499–501 (PAL) is the PAL element. Topologically, residues 517–684 (ACRQELSLFW…RKSMSTQAPL (168 aa)) are cytoplasmic. The interval 548 to 614 (KQEGAADAHT…SDAHLDPNEL (67 aa)) is disordered. Over residues 582 to 592 (EIVTISENEAT) the composition is skewed to polar residues. The span at 594–611 (PEDRSDSSEGWSDAHLDP) shows a compositional bias: basic and acidic residues.

It belongs to the peptidase A22B family. Interacts (via active sites) with FREY; the interaction stabilizes FREY1 protein and inhibits SPPL2C proteolytic activity. Glycosylated. In terms of tissue distribution, highly expressed in testis where it is primarily localised in spermatids (at protein level).

Its subcellular location is the endoplasmic reticulum membrane. Sperm-specific intramembrane-cleaving aspartic protease (I-CLiP) that cleaves distinct tail-anchored proteins and SNARE proteins. In elongated spermatids, modulates intracellular Ca(2+) homeostasis by controlling PLN abundance through proteolytic cleavage. During spermatogenesis, processes SNARE proteins and impacts vesicular trafficking which supports compartmental reorganization in maturating spermatids and may play a role in formation of the acrosome. Its function is as follows. In round spermatids, acts as a scaffold protein supporting FREY1 in IZUMO1 recruitment at the endoplasmic reticulum membrane and coordination of IZUMO1 complex assembly. Stabilizes FREY1 at the endoplasmic reticulum membrane through interaction. May recruit IZUMO1 interaction partners. The polypeptide is Signal peptide peptidase-like 2C (Homo sapiens (Human)).